A 341-amino-acid polypeptide reads, in one-letter code: Holliday junction branch migration complex subunit RuvB (341 aa).

The segment at 3–184 (DDFDIRDARM…FGINMHLEYY (182 aa)) is large ATPase domain (RuvB-L). ATP contacts are provided by residues Leu-23, Arg-24, Gly-65, Lys-68, Thr-69, Thr-70, 131 to 133 (EDY), Arg-174, Tyr-184, and Arg-221. Residue Thr-69 participates in Mg(2+) binding. The segment at 185 to 255 (DMETLTKIVL…IACFSLEALN (71 aa)) is small ATPAse domain (RuvB-S). Residues 258–341 (RYGLDQIDNK…RVGEQGFLFD (84 aa)) form a head domain (RuvB-H) region. Residues Arg-313 and Arg-318 each coordinate DNA.

This sequence belongs to the RuvB family. As to quaternary structure, homohexamer. Forms an RuvA(8)-RuvB(12)-Holliday junction (HJ) complex. HJ DNA is sandwiched between 2 RuvA tetramers; dsDNA enters through RuvA and exits via RuvB. An RuvB hexamer assembles on each DNA strand where it exits the tetramer. Each RuvB hexamer is contacted by two RuvA subunits (via domain III) on 2 adjacent RuvB subunits; this complex drives branch migration. In the full resolvosome a probable DNA-RuvA(4)-RuvB(12)-RuvC(2) complex forms which resolves the HJ.

The protein resides in the cytoplasm. It carries out the reaction ATP + H2O = ADP + phosphate + H(+). Its function is as follows. The RuvA-RuvB-RuvC complex processes Holliday junction (HJ) DNA during genetic recombination and DNA repair, while the RuvA-RuvB complex plays an important role in the rescue of blocked DNA replication forks via replication fork reversal (RFR). RuvA specifically binds to HJ cruciform DNA, conferring on it an open structure. The RuvB hexamer acts as an ATP-dependent pump, pulling dsDNA into and through the RuvAB complex. RuvB forms 2 homohexamers on either side of HJ DNA bound by 1 or 2 RuvA tetramers; 4 subunits per hexamer contact DNA at a time. Coordinated motions by a converter formed by DNA-disengaged RuvB subunits stimulates ATP hydrolysis and nucleotide exchange. Immobilization of the converter enables RuvB to convert the ATP-contained energy into a lever motion, pulling 2 nucleotides of DNA out of the RuvA tetramer per ATP hydrolyzed, thus driving DNA branch migration. The RuvB motors rotate together with the DNA substrate, which together with the progressing nucleotide cycle form the mechanistic basis for DNA recombination by continuous HJ branch migration. Branch migration allows RuvC to scan DNA until it finds its consensus sequence, where it cleaves and resolves cruciform DNA. The polypeptide is Holliday junction branch migration complex subunit RuvB (Parabacteroides distasonis (strain ATCC 8503 / DSM 20701 / CIP 104284 / JCM 5825 / NCTC 11152)).